The sequence spans 245 residues: Ribonuclease 3 (245 aa).

Positions 19–148 constitute an RNase III domain; the sequence is FKVFQEKIGI…FIGALYLDQG (130 aa). Glu-61 contacts Mg(2+). Asp-65 is an active-site residue. Mg(2+) contacts are provided by Asp-134 and Glu-137. The active site involves Glu-137. The DRBM domain occupies 174–243; sequence DYKSQLQELI…AAEALKKLKE (70 aa).

Belongs to the ribonuclease III family. Homodimer. Mg(2+) is required as a cofactor.

It is found in the cytoplasm. It catalyses the reaction Endonucleolytic cleavage to 5'-phosphomonoester.. In terms of biological role, digests double-stranded RNA. Involved in the processing of primary rRNA transcript to yield the immediate precursors to the large and small rRNAs (23S and 16S). Processes some mRNAs, and tRNAs when they are encoded in the rRNA operon. Processes pre-crRNA and tracrRNA of type II CRISPR loci if present in the organism. In Bacillus cereus (strain AH187), this protein is Ribonuclease 3.